The primary structure comprises 338 residues: Formamidase (338 aa).

Positions 15–257 (VVIGLAQLAL…DEIVCCELRP (243 aa)) constitute a CN hydrolase domain. Glutamate 61 serves as the catalytic Proton acceptor. The active-site Proton donor is lysine 130. Cysteine 163 functions as the Nucleophile in the catalytic mechanism.

Belongs to the carbon-nitrogen hydrolase superfamily. Aliphatic amidase family.

It carries out the reaction formamide + H2O = formate + NH4(+). In terms of biological role, is an aliphatic amidase with a restricted substrate specificity, as it only hydrolyzes formamide. This is Formamidase from Pseudomonas syringae pv. syringae (strain B728a).